The following is a 245-amino-acid chain: Zinc finger protein AZF1 (245 aa).

Residues 1–15 (MALETLNSPTATTTA) show a composition bias toward polar residues. Disordered regions lie at residues 1–57 (MALE…NKNL) and 112–141 (LGGH…SHSN). The C2H2-type 1 zinc finger occupies 97-119 (YKCTVCGKSFSSYQALGGHKTSH). The span at 123–134 (TNTSITSGNQEL) shows a compositional bias: polar residues. The C2H2-type 2 zinc finger occupies 164 to 186 (HTCSICFKSFASGQALGGHKRCH). The segment at 193–231 (GNGNGSSSNSVELVAGSDVSDVDNERWSEESAIGGHRGF) is disordered.

In terms of tissue distribution, highly expressed in roots and at lower levels in leaves and stems.

The protein localises to the nucleus. Its function is as follows. Transcriptional repressor involved in the inhibition of plant growth under abiotic stress conditions. Can repress the expression of various genes, including osmotic stress and abscisic acid-repressive genes and auxin-inducible genes, by binding to their promoter regions in a DNA sequence-specific manner. The chain is Zinc finger protein AZF1 (AZF1) from Arabidopsis thaliana (Mouse-ear cress).